A 22-amino-acid chain; its full sequence is NADH dehydrogenase [ubiquinone] 1 alpha subcomplex subunit 9 (22 aa).

Residues 1–22 are disordered; that stretch reads ASNLATGGAGPLIXKGTGGRSS.

It belongs to the complex I NDUFA9 subunit family. Complex I is composed of about 45 different subunits. FAD is required as a cofactor.

The protein resides in the mitochondrion matrix. Its function is as follows. Accessory subunit of the mitochondrial membrane respiratory chain NADH dehydrogenase (Complex I), that is believed not to be involved in catalysis. Complex I functions in the transfer of electrons from NADH to the respiratory chain. The immediate electron acceptor for the enzyme is believed to be ubiquinone. This is NADH dehydrogenase [ubiquinone] 1 alpha subcomplex subunit 9 from Solanum tuberosum (Potato).